A 195-amino-acid polypeptide reads, in one-letter code: Oocyte-secreted protein 3 (195 aa).

A signal peptide spans 1-21; that stretch reads MKAFVASGLLLLIFGMWRCSG. The N-linked (GlcNAc...) asparagine glycan is linked to N102.

This sequence belongs to the PLAC1 family. In terms of tissue distribution, oocyte-specific.

It is found in the secreted. The protein is Oocyte-secreted protein 3 of Mus musculus (Mouse).